We begin with the raw amino-acid sequence, 1388 residues long: DNA-directed RNA polymerase subunit beta' (1388 aa).

Positions 70, 72, 85, and 88 each coordinate Zn(2+). Residues aspartate 461, aspartate 463, and aspartate 465 each coordinate Mg(2+). Positions 808, 882, 889, and 892 each coordinate Zn(2+).

It belongs to the RNA polymerase beta' chain family. The RNAP catalytic core consists of 2 alpha, 1 beta, 1 beta' and 1 omega subunit. When a sigma factor is associated with the core the holoenzyme is formed, which can initiate transcription. Requires Mg(2+) as cofactor. Zn(2+) serves as cofactor.

It carries out the reaction RNA(n) + a ribonucleoside 5'-triphosphate = RNA(n+1) + diphosphate. DNA-dependent RNA polymerase catalyzes the transcription of DNA into RNA using the four ribonucleoside triphosphates as substrates. This chain is DNA-directed RNA polymerase subunit beta', found in Acidiphilium cryptum (strain JF-5).